The following is a 351-amino-acid chain: C(7)-cyclitol 7-kinase (351 aa).

The protein belongs to the ROK (NagC/XylR) family.

It carries out the reaction valienone + ATP = valienone 7-phosphate + ADP + H(+). The enzyme catalyses validone + ATP = validone 7-phosphate + ADP + H(+). Its function is as follows. Involved in the biosynthesis of the antifungal agent validamycin A. Catalyzes the phosphorylation of valienone and validone to their 7-phosphate derivatives. This Streptomyces hygroscopicus subsp. limoneus protein is C(7)-cyclitol 7-kinase.